A 360-amino-acid chain; its full sequence is Membrane-bound lytic murein transglycosylase C (360 aa).

Residues 1-16 form the signal peptide; it reads MKKLLALAVIAPLLIS. Cys-17 carries N-palmitoyl cysteine lipidation. Cys-17 carries the S-diacylglycerol cysteine lipid modification.

It belongs to the transglycosylase Slt family.

Its subcellular location is the cell outer membrane. The catalysed reaction is Exolytic cleavage of the (1-&gt;4)-beta-glycosidic linkage between N-acetylmuramic acid (MurNAc) and N-acetylglucosamine (GlcNAc) residues in peptidoglycan, from either the reducing or the non-reducing ends of the peptidoglycan chains, with concomitant formation of a 1,6-anhydrobond in the MurNAc residue.. Functionally, murein-degrading enzyme. May play a role in recycling of muropeptides during cell elongation and/or cell division. This is Membrane-bound lytic murein transglycosylase C from Salmonella typhi.